Here is a 654-residue protein sequence, read N- to C-terminus: Polyvinylalcohol dehydrogenase (654 aa).

Residues 1–32 (MGSHAWGGAVFSAATLIAFGSVVHASGTVAET) form the signal peptide. Residues 42–159 (ADQLDGETLY…AANQWNGWST (118 aa)) form the Cytochrome c domain. C55, C58, and H59 together coordinate heme c.

This sequence belongs to the bacterial PQQ dehydrogenase family. Monomer. The cofactor is pyrroloquinoline quinone.

Its subcellular location is the periplasm. The catalysed reaction is a polyvinyl alcohol + 2n Fe(III)-[cytochrome c] = an oxidized polyvinyl alcohol + 2n Fe(II)-[cytochrome c] + 2n H(+). Catalyzes the oxidation of polyvinyl alcohol (PVA) in the polyvinyl alcohol degradation pathway. This is Polyvinylalcohol dehydrogenase (pvadh) from Sphingopyxis sp. (strain 113P3).